Consider the following 273-residue polypeptide: Embryonic polyadenylate-binding protein 2 (273 aa).

A disordered region spans residues 22–57 (SSDPEAQGWGAWGRTEKTSLVPRAGSRAGSDKEAEE). The 78-residue stretch at 143–220 (RSVFVGNVDY…RVIKVLPKRT (78 aa)) folds into the RRM domain.

Its subcellular location is the cytoplasm. In terms of biological role, binds the poly(A) tail of mRNA. In Mus musculus (Mouse), this protein is Embryonic polyadenylate-binding protein 2 (Pabpn1l).